Here is a 558-residue protein sequence, read N- to C-terminus: Putative polypeptide N-acetylgalactosaminyltransferase 13 (558 aa).

The Cytoplasmic segment spans residues 1-12 (MHAGGKYCGPRH). The helical; Signal-anchor for type II membrane protein transmembrane segment at 13–32 (CSFYIIAFLICQLFFLVIFI) threads the bilayer. The Lumenal portion of the chain corresponds to 33–558 (RNDDASSANE…QFALEMEGQT (526 aa)). Residues Asn48 and Asn111 are each glycosylated (N-linked (GlcNAc...) asparagine). Disulfide bonds link Cys97-Cys335, Cys326-Cys412, Cys445-Cys460, and Cys484-Cys498. The interval 109–225 (EANVSVVISF…EGWLEPLLER (117 aa)) is catalytic subdomain A. The substrate site is built by Asp150 and Arg186. Asp209 is a binding site for Mn(2+). Ser210 provides a ligand contact to substrate. A Mn(2+)-binding site is contributed by His211. The interval 281–343 (PYQSPAFAGG…PCSRIGHIFR (63 aa)) is catalytic subdomain B. Trp312 serves as a coordination point for substrate. His340 contacts Mn(2+). 2 residues coordinate substrate: Arg343 and His346. A Ricin B-type lectin domain is found at 422–556 (VSPELRMHFD…SFQFALEMEG (135 aa)). Asn501 carries N-linked (GlcNAc...) asparagine glycosylation. The cysteines at positions 525 and 539 are disulfide-linked.

The protein belongs to the glycosyltransferase 2 family. GalNAc-T subfamily. It depends on Mn(2+) as a cofactor. During embryonic stages 16-17, very weak expression in the midgut.

The protein resides in the golgi apparatus membrane. The enzyme catalyses L-seryl-[protein] + UDP-N-acetyl-alpha-D-galactosamine = a 3-O-[N-acetyl-alpha-D-galactosaminyl]-L-seryl-[protein] + UDP + H(+). It carries out the reaction L-threonyl-[protein] + UDP-N-acetyl-alpha-D-galactosamine = a 3-O-[N-acetyl-alpha-D-galactosaminyl]-L-threonyl-[protein] + UDP + H(+). It functions in the pathway protein modification; protein glycosylation. In terms of biological role, may catalyze the initial reaction in O-linked oligosaccharide biosynthesis, the transfer of an N-acetyl-D-galactosamine residue to a serine or threonine residue on the protein receptor. The polypeptide is Putative polypeptide N-acetylgalactosaminyltransferase 13 (pgant13) (Drosophila melanogaster (Fruit fly)).